A 498-amino-acid chain; its full sequence is ATP synthase subunit beta, chloroplastic (498 aa).

T6 is subject to Phosphothreonine. S13 is subject to Phosphoserine. 172-179 (GGAGVGKT) is an ATP binding site.

The protein belongs to the ATPase alpha/beta chains family. As to quaternary structure, F-type ATPases have 2 components, CF(1) - the catalytic core - and CF(0) - the membrane proton channel. CF(1) has five subunits: alpha(3), beta(3), gamma(1), delta(1), epsilon(1). CF(0) has four main subunits: a(1), b(1), b'(1) and c(9-12).

The protein localises to the plastid. It localises to the chloroplast thylakoid membrane. It carries out the reaction ATP + H2O + 4 H(+)(in) = ADP + phosphate + 5 H(+)(out). Produces ATP from ADP in the presence of a proton gradient across the membrane. The catalytic sites are hosted primarily by the beta subunits. The chain is ATP synthase subunit beta, chloroplastic from Nasturtium officinale (Watercress).